A 69-amino-acid chain; its full sequence is Small, acid-soluble spore protein 1 (69 aa).

This sequence belongs to the alpha/beta-type SASP family.

SASP are bound to spore DNA. They are double-stranded DNA-binding proteins that cause DNA to change to an a-like conformation. They protect the DNA backbone from chemical and enzymatic cleavage and are thus involved in dormant spore's high resistance to UV light. This chain is Small, acid-soluble spore protein 1 (Su-1), found in Sporosarcina ureae.